A 302-amino-acid chain; its full sequence is Sulfate adenylyltransferase subunit 2 (302 aa).

This sequence belongs to the PAPS reductase family. CysD subfamily. As to quaternary structure, heterodimer composed of CysD, the smaller subunit, and CysN.

The catalysed reaction is sulfate + ATP + H(+) = adenosine 5'-phosphosulfate + diphosphate. It participates in sulfur metabolism; hydrogen sulfide biosynthesis; sulfite from sulfate: step 1/3. Functionally, with CysN forms the ATP sulfurylase (ATPS) that catalyzes the adenylation of sulfate producing adenosine 5'-phosphosulfate (APS) and diphosphate, the first enzymatic step in sulfur assimilation pathway. APS synthesis involves the formation of a high-energy phosphoric-sulfuric acid anhydride bond driven by GTP hydrolysis by CysN coupled to ATP hydrolysis by CysD. In Erwinia tasmaniensis (strain DSM 17950 / CFBP 7177 / CIP 109463 / NCPPB 4357 / Et1/99), this protein is Sulfate adenylyltransferase subunit 2.